A 193-amino-acid chain; its full sequence is ATP-dependent Clp protease proteolytic subunit (193 aa).

Ser98 serves as the catalytic Nucleophile. Residue His123 is part of the active site.

This sequence belongs to the peptidase S14 family. As to quaternary structure, fourteen ClpP subunits assemble into 2 heptameric rings which stack back to back to give a disk-like structure with a central cavity, resembling the structure of eukaryotic proteasomes.

It is found in the cytoplasm. The catalysed reaction is Hydrolysis of proteins to small peptides in the presence of ATP and magnesium. alpha-casein is the usual test substrate. In the absence of ATP, only oligopeptides shorter than five residues are hydrolyzed (such as succinyl-Leu-Tyr-|-NHMec, and Leu-Tyr-Leu-|-Tyr-Trp, in which cleavage of the -Tyr-|-Leu- and -Tyr-|-Trp bonds also occurs).. Its function is as follows. Cleaves peptides in various proteins in a process that requires ATP hydrolysis. Has a chymotrypsin-like activity. Plays a major role in the degradation of misfolded proteins. The sequence is that of ATP-dependent Clp protease proteolytic subunit from Haemophilus influenzae (strain 86-028NP).